Consider the following 466-residue polypeptide: Acetyl-coenzyme A carboxylase carboxyl transferase subunit beta, chloroplastic (466 aa).

Residues 198 to 466 (LWIQCENCYE…FPLNQNSIGQ (269 aa)) form the CoA carboxyltransferase N-terminal domain. Cys202, Cys205, Cys221, and Cys224 together coordinate Zn(2+). The C4-type zinc-finger motif lies at 202-224 (CENCYELNYKKLLKSKMRICDEC).

The protein belongs to the AccD/PCCB family. In terms of assembly, acetyl-CoA carboxylase is a heterohexamer composed of biotin carboxyl carrier protein, biotin carboxylase and 2 subunits each of ACCase subunit alpha and ACCase plastid-coded subunit beta (accD). Zn(2+) is required as a cofactor.

It localises to the plastid. The protein localises to the chloroplast stroma. It carries out the reaction N(6)-carboxybiotinyl-L-lysyl-[protein] + acetyl-CoA = N(6)-biotinyl-L-lysyl-[protein] + malonyl-CoA. Its pathway is lipid metabolism; malonyl-CoA biosynthesis; malonyl-CoA from acetyl-CoA: step 1/1. Its function is as follows. Component of the acetyl coenzyme A carboxylase (ACC) complex. Biotin carboxylase (BC) catalyzes the carboxylation of biotin on its carrier protein (BCCP) and then the CO(2) group is transferred by the transcarboxylase to acetyl-CoA to form malonyl-CoA. This is Acetyl-coenzyme A carboxylase carboxyl transferase subunit beta, chloroplastic from Fagopyrum esculentum subsp. ancestrale (Wild buckwheat).